The primary structure comprises 146 residues: MGEVKHLQINYKTDELFADFREFGNKNLYMIEELKGQMIDASSDSPFYGIFVGNKLVARMALLDKGEVEETYFPNSNYYILLWKLEVLDTYQRRGYAKQLLNFAKENKKPIKAIARNNSKAFFLTQGFKDVATKNPEGHDILIWNP.

Residues 7–146 (LQINYKTDEL…EGHDILIWNP (140 aa)) form the N-acetyltransferase domain.

This is an uncharacterized protein from Staphylococcus epidermidis (strain ATCC 35984 / DSM 28319 / BCRC 17069 / CCUG 31568 / BM 3577 / RP62A).